A 344-amino-acid polypeptide reads, in one-letter code: Glyceraldehyde-3-phosphate dehydrogenase (344 aa).

NAD(+)-binding positions include 11–12 and G110; that span reads TI. 139–141 is a binding site for D-glyceraldehyde 3-phosphate; it reads SCN. The Nucleophile role is filled by C140. R169 contacts NAD(+). A D-glyceraldehyde 3-phosphate-binding site is contributed by 195–196; it reads HG. Q302 contributes to the NAD(+) binding site.

The protein belongs to the glyceraldehyde-3-phosphate dehydrogenase family. Homotetramer.

Its subcellular location is the cytoplasm. The catalysed reaction is D-glyceraldehyde 3-phosphate + phosphate + NADP(+) = (2R)-3-phospho-glyceroyl phosphate + NADPH + H(+). The enzyme catalyses D-glyceraldehyde 3-phosphate + phosphate + NAD(+) = (2R)-3-phospho-glyceroyl phosphate + NADH + H(+). It participates in carbohydrate degradation; glycolysis; pyruvate from D-glyceraldehyde 3-phosphate: step 1/5. This chain is Glyceraldehyde-3-phosphate dehydrogenase, found in Pyrobaculum neutrophilum (strain DSM 2338 / JCM 9278 / NBRC 100436 / V24Sta) (Thermoproteus neutrophilus).